We begin with the raw amino-acid sequence, 310 residues long: UDP-N-acetylenolpyruvoylglucosamine reductase (310 aa).

Positions R30 to G200 constitute an FAD-binding PCMH-type domain. The active site involves R179. S230 (proton donor) is an active-site residue. E300 is a catalytic residue.

It belongs to the MurB family. It depends on FAD as a cofactor.

It is found in the cytoplasm. The catalysed reaction is UDP-N-acetyl-alpha-D-muramate + NADP(+) = UDP-N-acetyl-3-O-(1-carboxyvinyl)-alpha-D-glucosamine + NADPH + H(+). Its pathway is cell wall biogenesis; peptidoglycan biosynthesis. Functionally, cell wall formation. This is UDP-N-acetylenolpyruvoylglucosamine reductase from Synechococcus sp. (strain WH7803).